The primary structure comprises 554 residues: Phospholipase B-like protein E (554 aa).

The N-terminal stretch at 1-19 is a signal peptide; the sequence is MKLFILLIVIVFLISNSYS. Residues asparagine 113, asparagine 140, asparagine 231, asparagine 302, asparagine 340, and asparagine 546 are each glycosylated (N-linked (GlcNAc...) asparagine).

Belongs to the phospholipase B-like family.

Its subcellular location is the secreted. Its function is as follows. Probable phospholipase. This chain is Phospholipase B-like protein E (plbE), found in Dictyostelium discoideum (Social amoeba).